The sequence spans 173 residues: NADH-ubiquinone oxidoreductase chain 6 (173 aa).

A run of 5 helical transmembrane segments spans residues 1 to 21 (MTYF…AVAS), 27 to 47 (YGVV…LSLG), 48 to 68 (VSFV…VVFV), 91 to 111 (GVSF…IGCL), and 139 to 159 (CGVG…FVVL).

It belongs to the complex I subunit 6 family.

The protein localises to the mitochondrion membrane. It carries out the reaction a ubiquinone + NADH + 5 H(+)(in) = a ubiquinol + NAD(+) + 4 H(+)(out). Core subunit of the mitochondrial membrane respiratory chain NADH dehydrogenase (Complex I) that is believed to belong to the minimal assembly required for catalysis. Complex I functions in the transfer of electrons from NADH to the respiratory chain. The immediate electron acceptor for the enzyme is believed to be ubiquinone. The sequence is that of NADH-ubiquinone oxidoreductase chain 6 (MT-ND6) from Fratercula cirrhata (Tufted puffin).